The primary structure comprises 157 residues: 2-C-methyl-D-erythritol 2,4-cyclodiphosphate synthase (157 aa).

Residues D8 and H10 each coordinate a divalent metal cation. 4-CDP-2-C-methyl-D-erythritol 2-phosphate-binding positions include 8-10 and 34-35; these read DVH and HS. H42 serves as a coordination point for a divalent metal cation. 4-CDP-2-C-methyl-D-erythritol 2-phosphate-binding positions include 56–58, 61–65, 100–106, 132–135, F139, and R142; these read DIG, FPDTD, AQAPKMA, and TTTE.

This sequence belongs to the IspF family. In terms of assembly, homotrimer. Requires a divalent metal cation as cofactor.

The catalysed reaction is 4-CDP-2-C-methyl-D-erythritol 2-phosphate = 2-C-methyl-D-erythritol 2,4-cyclic diphosphate + CMP. It functions in the pathway isoprenoid biosynthesis; isopentenyl diphosphate biosynthesis via DXP pathway; isopentenyl diphosphate from 1-deoxy-D-xylulose 5-phosphate: step 4/6. Functionally, involved in the biosynthesis of isopentenyl diphosphate (IPP) and dimethylallyl diphosphate (DMAPP), two major building blocks of isoprenoid compounds. Catalyzes the conversion of 4-diphosphocytidyl-2-C-methyl-D-erythritol 2-phosphate (CDP-ME2P) to 2-C-methyl-D-erythritol 2,4-cyclodiphosphate (ME-CPP) with a corresponding release of cytidine 5-monophosphate (CMP). This is 2-C-methyl-D-erythritol 2,4-cyclodiphosphate synthase from Pseudomonas syringae pv. tomato (strain ATCC BAA-871 / DC3000).